Reading from the N-terminus, the 135-residue chain is Small ribosomal subunit protein uS9 (135 aa).

The segment covering 108–118 has biased composition (basic and acidic residues); that stretch reads VGDPRRTEPHK. The interval 108–135 is disordered; it reads VGDPRRTEPHKPNRSTKGPRAKRQKSYR. Residues 119-135 show a composition bias toward basic residues; the sequence is PNRSTKGPRAKRQKSYR.

It belongs to the universal ribosomal protein uS9 family.

This is Small ribosomal subunit protein uS9 (rps9) from Pyrococcus abyssi (strain GE5 / Orsay).